The primary structure comprises 319 residues: Ribosomal protein L11 methyltransferase (319 aa).

Positions 165, 186, 208, and 251 each coordinate S-adenosyl-L-methionine.

This sequence belongs to the methyltransferase superfamily. PrmA family.

It is found in the cytoplasm. It carries out the reaction L-lysyl-[protein] + 3 S-adenosyl-L-methionine = N(6),N(6),N(6)-trimethyl-L-lysyl-[protein] + 3 S-adenosyl-L-homocysteine + 3 H(+). Methylates ribosomal protein L11. This is Ribosomal protein L11 methyltransferase from Limosilactobacillus reuteri subsp. reuteri (strain JCM 1112) (Lactobacillus reuteri).